Consider the following 529-residue polypeptide: Scarecrow-like protein 13 (529 aa).

Residues Ala51–Ile81 show a composition bias toward polar residues. The interval Ala51–Leu84 is disordered. One can recognise a GRAS domain in the interval Leu146–Lys525. Residues Leu153–Asn213 form a leucine repeat I (LRI) region. A VHIID region spans residues Met232–Gly297. Residues Val263–Asp267 carry the VHIID motif. Positions Leu313–His345 are leucine repeat II (LRII). A PFYRE region spans residues Val354–Asn448. Residues Ala451–Lys525 are SAW.

It belongs to the GRAS family. In terms of tissue distribution, expressed in roots, hypocotyls, cotyledons, shoot apex, leaves, flowers and siliques.

It is found in the cytoplasm. It localises to the nucleus. Functionally, probable transcription factor that acts as a positive regulator of continuous red light signals downstream of phytochrome B (phyB). Required for the regulation of hypocotyl elongation during de-etiolation. May be required to modulate phytochrome A (phyA) signal transduction in a phyB-independent way. In Arabidopsis thaliana (Mouse-ear cress), this protein is Scarecrow-like protein 13 (SCL13).